Here is a 331-residue protein sequence, read N- to C-terminus: Probable allantoicase (331 aa).

Belongs to the allantoicase family.

It carries out the reaction allantoate + H2O = (S)-ureidoglycolate + urea. The protein operates within nitrogen metabolism; (S)-allantoin degradation; (S)-ureidoglycolate from allantoate (aminidohydrolase route): step 1/1. This Stutzerimonas stutzeri (strain A1501) (Pseudomonas stutzeri) protein is Probable allantoicase.